Consider the following 265-residue polypeptide: MDWLHVVALAVIQGLTEFLPISSSAHLILPSQLLGWPDQGLAFDVAVHVGSLAAVVLAFHREVAHILRDWVAQCRGGPATPESRLGWAVIVGTLPAVVIGFLLENVIESYLRASLVIAITTLLFGLLLWWADVRGSRRHALTAMTLRNALIIGFAQALALIPGTSRSGITITAALLLGFTRQAAARFSFLLSIPLILAAGSLKGVELIESGEGVAWGTLVAGTLMSFVAAWLCIKLFLAALDRIGMLPFVIYRLILGIVLLVWVA.

A run of 8 helical transmembrane segments spans residues 1–21 (MDWLHVVALAVIQGLTEFLPI), 40–60 (GLAFDVAVHVGSLAAVVLAFH), 87–107 (WAVIVGTLPAVVIGFLLENVI), 113–133 (ASLVIAITTLLFGLLLWWADV), 151–173 (IIGFAQALALIPGTSRSGITITA), 188–208 (SFLLSIPLILAAGSLKGVELI), 214–234 (VAWGTLVAGTLMSFVAAWLCI), and 244–264 (IGMLPFVIYRLILGIVLLVWV).

This sequence belongs to the UppP family.

It localises to the cell inner membrane. The enzyme catalyses di-trans,octa-cis-undecaprenyl diphosphate + H2O = di-trans,octa-cis-undecaprenyl phosphate + phosphate + H(+). In terms of biological role, catalyzes the dephosphorylation of undecaprenyl diphosphate (UPP). Confers resistance to bacitracin. This Chromohalobacter salexigens (strain ATCC BAA-138 / DSM 3043 / CIP 106854 / NCIMB 13768 / 1H11) protein is Undecaprenyl-diphosphatase.